We begin with the raw amino-acid sequence, 563 residues long: Quinidine resistance protein 1 (563 aa).

Positions 1-10 (MTKQQTSVMR) are enriched in polar residues. Residues 1 to 50 (MTKQQTSVMRNASIAKEEREGSDNNNVDRSSSDAISDNDAERSNSHSEID) are disordered. Residues 1–75 (MTKQQTSVMR…KQKMLLVVQC (75 aa)) lie on the Cytoplasmic side of the membrane. Over residues 23 to 33 (DNNNVDRSSSD) the composition is skewed to low complexity. Over residues 39-49 (DAERSNSHSEI) the composition is skewed to basic and acidic residues. The helical transmembrane segment at 76–96 (AFTGFFSTVAGSIYYPVLTII) threads the bilayer. Topologically, residues 97–108 (ERKFNITEELAN) are extracellular. The helical transmembrane segment at 109–129 (VTIVVYFIFQGVAPSIMGGLA) threads the bilayer. Topologically, residues 130-135 (DTFGRR) are cytoplasmic. A helical transmembrane segment spans residues 136-156 (PIVLWAILAYFCACIGLACAH). The Extracellular portion of the chain corresponds to 157–165 (NYAQILALR). The helical transmembrane segment at 166-186 (CLQAAGISPVIAINSGIMGDV) threads the bilayer. The Cytoplasmic portion of the chain corresponds to 187 to 195 (TTKVERGGY). Residues 196–216 (VGLVAGFQVVGTAFGALIGAG) form a helical membrane-spanning segment. Over 217–224 (LSSKWGWR) the chain is Extracellular. The chain crosses the membrane as a helical span at residues 225–245 (AIFWFLAIGSGICLVFSTLLM). At 246–296 (PETKRTLVGNGSVTPRSFLNRSLILHVGSVKKTLHLDDPDPETLEPRTSVD) the chain is on the cytoplasmic side. The chain crosses the membrane as a helical span at residues 297-317 (FLAPLKILHIREIDILLSIAG). The Extracellular portion of the chain corresponds to 318-341 (LQFSTWTTHQTALTIVLSKKYNLS). Residues 342-362 (VAKIGLCFLPAGISTLTSIIS) form a helical membrane-spanning segment. At 363 to 421 (AGRYLNWSYRTRKVKYNRWIKEQELQLMEKYKGDKNKVAELIHSNSHYAFNLVEARLHP) the chain is on the cytoplasmic side. A helical membrane pass occupies residues 422 to 442 (AFVTLLLSSIGFTAFGWCISV). Residues 443-445 (KTP) lie on the Extracellular side of the membrane. The chain crosses the membrane as a helical span at residues 446-466 (LAAVLCTSAFASLFSNCILTF). At 467–481 (STTLIVDLFPSKAST) the chain is on the cytoplasmic side. The helical transmembrane segment at 482–502 (ATGCLNLFRCLLSAIFIAALT) threads the bilayer. The Extracellular portion of the chain corresponds to 503–511 (KMVEKMRYG). The chain crosses the membrane as a helical span at residues 512-532 (GVFTFLSAITSSSSLLLFYLL). At 533 to 563 (KNGKQLSFDRIRANDKSAGRSVGKNSEKVST) the chain is on the cytoplasmic side.

The protein belongs to the major facilitator superfamily. CAR1 family.

The protein localises to the cell membrane. In terms of biological role, multidrug resistance transporter involved in resistance and adaptation to quinidine and ketoconazole. The polypeptide is Quinidine resistance protein 1 (QDR1) (Saccharomyces cerevisiae (strain ATCC 204508 / S288c) (Baker's yeast)).